A 40-amino-acid polypeptide reads, in one-letter code: Chitin-binding protein 4 (40 aa).

Post-translationally, N-glycosylated.

Chitin-binding protein. Has antifungal activity against C.krusei, C.albicans, C.tropicalis and C.parapsilosis. Has antinociceptive and anti-inflammatory activity in mice. In Moringa oleifera (Horseradish tree), this protein is Chitin-binding protein 4.